The following is a 376-amino-acid chain: Pre-mRNA-splicing factor cwf25 (376 aa).

Residues 25-60 (KDEQAHKEEMKRVEQLRREIEEERQLLELHRLQEAA) are a coiled coil. Disordered stretches follow at residues 153–211 (LMEK…DRNN) and 258–289 (RTSRQYSRSPSPDFRTRNHQFHSRDSQPITQR). The span at 154 to 167 (MEKRKYSLDSDRKS) shows a compositional bias: basic and acidic residues. Over residues 168-178 (KERRHRDRHHR) the composition is skewed to basic residues. Residues 179-199 (SNQDRSRERSDNEQHSSDKRE) show a composition bias toward basic and acidic residues. Phosphoserine is present on residues S266 and S268. A coiled-coil region spans residues 286–334 (ITQRHTDIESRLQKMQDNAKELDESRRKKIELLEKKERDEEQFLEKERR).

This sequence belongs to the CWC25 family. Belongs to the 40S cdc5-associated complex (or cwf complex), a spliceosome sub-complex reminiscent of a late-stage spliceosome composed of the U2, U5 and U6 snRNAs and at least brr2, cdc5, cwf2/prp3, cwf3/syf1, cwf4/syf3, cwf5/ecm2, spp42/cwf6, cwf7/spf27, cwf8, cwf9, cwf10, cwf11, cwf12, prp45/cwf13, cwf14, cwf15, cwf16, cwf17, cwf18, cwf19, cwf20, cwf21, cwf22, cwf23, cwf24, cwf25, cwf26, cyp7/cwf27, cwf28, cwf29/ist3, lea1, msl1, prp5/cwf1, prp10, prp12/sap130, prp17, prp22, sap61, sap62, sap114, sap145, slu7, smb1, smd1, smd3, smf1, smg1 and syf2.

The protein localises to the nucleus. Functionally, involved in mRNA splicing. This Schizosaccharomyces pombe (strain 972 / ATCC 24843) (Fission yeast) protein is Pre-mRNA-splicing factor cwf25 (cwf25).